A 205-amino-acid polypeptide reads, in one-letter code: Imidazole glycerol phosphate synthase subunit HisH (205 aa).

The Glutamine amidotransferase type-1 domain maps to 6 to 205 (RVGIIDHGSG…LLTRWLNQLS (200 aa)). Cysteine 84 serves as the catalytic Nucleophile. Active-site residues include histidine 185 and glutamate 187.

As to quaternary structure, heterodimer of HisH and HisF.

The protein localises to the cytoplasm. It catalyses the reaction 5-[(5-phospho-1-deoxy-D-ribulos-1-ylimino)methylamino]-1-(5-phospho-beta-D-ribosyl)imidazole-4-carboxamide + L-glutamine = D-erythro-1-(imidazol-4-yl)glycerol 3-phosphate + 5-amino-1-(5-phospho-beta-D-ribosyl)imidazole-4-carboxamide + L-glutamate + H(+). It carries out the reaction L-glutamine + H2O = L-glutamate + NH4(+). It participates in amino-acid biosynthesis; L-histidine biosynthesis; L-histidine from 5-phospho-alpha-D-ribose 1-diphosphate: step 5/9. Functionally, IGPS catalyzes the conversion of PRFAR and glutamine to IGP, AICAR and glutamate. The HisH subunit catalyzes the hydrolysis of glutamine to glutamate and ammonia as part of the synthesis of IGP and AICAR. The resulting ammonia molecule is channeled to the active site of HisF. The polypeptide is Imidazole glycerol phosphate synthase subunit HisH (Cutibacterium acnes (strain DSM 16379 / KPA171202) (Propionibacterium acnes)).